The sequence spans 167 residues: Myelin basic protein (167 aa).

Ala1 is subject to N-acetylalanine. Phosphoserine is present on residues Ser7 and Ser12. Tyr14 bears the Phosphotyrosine mark. At Thr17 the chain carries Phosphothreonine. Position 19 is a phosphoserine (Ser19). Thr20 is subject to Phosphothreonine. Citrulline is present on residues Arg25 and Arg31. Thr35 is modified (phosphothreonine). A Phosphoserine modification is found at Ser40. An omega-N-methylarginine mark is found at Arg43 and Arg49. An induces experimental autoimmune encephalomyelitis (EAE) 1 region spans residues 45-87 (FGSDRAAPKRGSGKDSHHAARTTHYGSLPQKSQRSQDENPVVH). Positions 46-114 (GSDRAAPKRG…GRGLSLSRFS (69 aa)) are disordered. Ser56 bears the Phosphoserine mark. Thr67 is modified (phosphothreonine). Residue Tyr69 is modified to Phosphotyrosine. Ser76 carries the phosphoserine modification. Thr94 and Thr97 each carry phosphothreonine. Gln102 carries the post-translational modification Deamidated glutamine. At Arg106 the chain carries Omega-N-methylarginine; alternate. Arg106 bears the Symmetric dimethylarginine; alternate mark. Ser114 carries the phosphoserine modification. Positions 114-122 (SWGAEGQKP) are induces experimental autoimmune encephalomyelitis (EAE) 2. Residue Lys121 is modified to N6-acetyllysine. Arg129 bears the Citrulline mark. The disordered stretch occupies residues 136 to 167 (GFKGAHDAQGTLSKIFKLGGRDSRSGSPMARR). Gln144 is subject to Deamidated glutamine. Arg156 is modified (citrulline). Ser158 carries the post-translational modification Phosphoserine. Ser162 carries the phosphoserine; by UHMK1 modification. Arg167 bears the Citrulline mark.

It belongs to the myelin basic protein family. In terms of assembly, homodimer. In terms of processing, at least 5 charge isomers; C1 (the most cationic, least modified, and most abundant form), C2, C3, C4 and C5 (the least cationic form); are produced as a result of optional post-translational modifications such as phosphorylation of serine or threonine residues, deamidation of glutamine or asparagine residues, citrullination and methylation of arginine residues. C1 and C2 are unphosphorylated, C3 and C4 are monophosphorylated and C5 is phosphorylated at two positions. Post-translationally, phosphorylated by TAOK2, VRK2, MAPK11, MAPK12, MAPK14 and MINK1. Proteolytically cleaved in B cell lysosomes by cathepsin CTSG which degrades the major immunogenic MBP epitope and prevents the activation of MBP-specific autoreactive T cells. Found in both the central and the peripheral nervous system.

The protein localises to the myelin membrane. In terms of biological role, is, with PLP, the most abundant protein component of the myelin membrane in the CNS. Has a role in both the formation and stabilization of this compact multilayer arrangement of bilayers. Each splice variant and charge isomer may have a specialized function in the assembly of an optimized, biochemically functional myelin membrane. The polypeptide is Myelin basic protein (MBP) (Cavia porcellus (Guinea pig)).